Consider the following 352-residue polypeptide: Ribosome biogenesis protein BRX1 homolog (352 aa).

A disordered region spans residues 1 to 55 (MGKFSKIKKVQEEESAHQKMEWEAAGAKDSSSDDSSDESDNDDQPKQATEETRKR). The span at 9–22 (KVQEEESAHQKMEW) shows a compositional bias: basic and acidic residues. Over residues 32–42 (SDDSSDESDND) the composition is skewed to acidic residues. The span at 43-55 (DQPKQATEETRKR) shows a compositional bias: basic and acidic residues. Positions 63–253 (ERVLVLCSRG…MVRLFAGSFE (191 aa)) constitute a Brix domain.

This sequence belongs to the BRX1 family.

It is found in the nucleus. The protein localises to the nucleolus. In terms of biological role, required for biogenesis of the 60S ribosomal subunit. The sequence is that of Ribosome biogenesis protein BRX1 homolog from Caenorhabditis elegans.